We begin with the raw amino-acid sequence, 97 residues long: Putative septation protein SpoVG (97 aa).

It belongs to the SpoVG family.

Functionally, could be involved in septation. The sequence is that of Putative septation protein SpoVG from Borreliella afzelii (strain PKo) (Borrelia afzelii).